A 187-amino-acid chain; its full sequence is Glutathione peroxidase 7 (187 aa).

Residues M1–A19 form the signal peptide. Residue C57 is part of the active site.

The protein belongs to the glutathione peroxidase family. Expressed in esophageal epithelial cells; expression is up-regulated after exposure to acidic bile acids.

It localises to the secreted. The enzyme catalyses 2 glutathione + H2O2 = glutathione disulfide + 2 H2O. Functionally, it protects esophageal epithelia from hydrogen peroxide-induced oxidative stress. It suppresses acidic bile acid-induced reactive oxygen species (ROS) and protects against oxidative DNA damage and double-strand breaks. The polypeptide is Glutathione peroxidase 7 (GPX7) (Homo sapiens (Human)).